The primary structure comprises 593 residues: SPI-1 type 3 secretion system translocon protein SctE (593 aa).

2 coiled-coil regions span residues 151 to 208 (DTAK…ATDA) and 287 to 314 (EGRQ…NRIM). The next 2 helical transmembrane spans lie at 330–350 (VVAA…GLAV) and 409–429 (IVGA…VAVV).

It belongs to the SctE/SipB/YopB family. In terms of assembly, the core secretion machinery of the T3SS is composed of approximately 20 different proteins, including cytoplasmic components, a base, an export apparatus and a needle. This subunit is involved in the formation of a pore, called the translocon, in host membrane.

The protein resides in the secreted. It localises to the host membrane. Functionally, component of the type III secretion system 1 (SPI-1 T3SS), also called injectisome, which is used to inject bacterial effector proteins into eukaryotic host cells. SipB/SctE1 and SipC/SctB are inserted into the host membrane where they form a pore and allow the translocation of effector proteins into the cytosol of target cells. This is SPI-1 type 3 secretion system translocon protein SctE from Salmonella dublin.